We begin with the raw amino-acid sequence, 905 residues long: MLASLIGGIFGTKNERELKRMRKIVDQINALEPTISALSDADLSAKTPEFKERYNKGESLDKLLPEAFAVCREAAKRVMGMRHYDVQLIGGITLHEGKIAEMRTGEGKTLMGTLACYLNALSGQGVHVITVNDYLAQRDAELNRPLFEFLGLSIGIIYSMQSPTEKAEAYQADITYGTNNEFGFDYLRDNMVFSLQEKKQRGLNYAIIDEVDSILIDEARTPLIISGQSEDSSQLYAAINSIPPKLQPQKEEKVADGGHFWIDEKQRSVEMTEIGFETVEQELIQMGLLAEGESLYSATNLNLVHHVTAAIRAHFLYHRDVHYIIHNGEVIIVDEHTGRTMPGRRWSEGLHQAVEAKESLEIQPENQTLATTTFQNYFRLYKKLSGMTGTADTEAAEMKEIYGLDVVIIPTHRPMVRQDQNDLIYLNRNGKYDAIVKEIKNIQETRAPILVGTATIEASEILSHKLTQAGIRHEVLNAKQHEREADIIAQAGSPDSVTIATNMAGRGTDIILGGNWKAKLAKIENPTLEDEERLKAEWERDHETVLSAGGLHIIGSERHESRRIDNQLRGRAGRQGDPGVSRFYLSLEDDLMRIFAGDRVVGMMRAMGLKEDEAIEHKMVSRSIENAQRKVEARNFDIRKNLLKYDDVNNEQRKIIYSQRDEILAEHTLQDYIEEMHHEVMVGLIANFIPPESIHDQWDIEGLENALRVDLGIEVPVQQWLDEDRRLDEEALVQRITDEVLARYHARREQMGEESAAMLERHFMLNSLDRHWKDHLAAMDYLRQGIHLRGYAQKNPEQEYKKEAFNLFVNMLGVIKSDVVTDLSRIHVPTPEELAELEAQQQQQAEAMRLSFEHDEVDGLTGAVTHHEVEEQPIVSSDHIVPPSSRNAPCPCGSGLKYKQCHGRL.

ATP contacts are provided by residues glutamine 87, 105–109, and aspartate 509; that span reads GEGKT. 4 residues coordinate Zn(2+): cysteine 890, cysteine 892, cysteine 901, and histidine 902.

Belongs to the SecA family. As to quaternary structure, monomer and homodimer. Part of the essential Sec protein translocation apparatus which comprises SecA, SecYEG and auxiliary proteins SecDF-YajC and YidC. The cofactor is Zn(2+).

The protein resides in the cell inner membrane. The protein localises to the cytoplasm. It catalyses the reaction ATP + H2O + cellular proteinSide 1 = ADP + phosphate + cellular proteinSide 2.. Its function is as follows. Part of the Sec protein translocase complex. Interacts with the SecYEG preprotein conducting channel. Has a central role in coupling the hydrolysis of ATP to the transfer of proteins into and across the cell membrane, serving both as a receptor for the preprotein-SecB complex and as an ATP-driven molecular motor driving the stepwise translocation of polypeptide chains across the membrane. The chain is Protein translocase subunit SecA from Acinetobacter baylyi (strain ATCC 33305 / BD413 / ADP1).